The primary structure comprises 416 residues: Dihydrolipoyllysine-residue succinyltransferase component of 2-oxoglutarate dehydrogenase complex (416 aa).

A Lipoyl-binding domain is found at 3–78 (IVDVKVPQLS…VADEIIAKID (76 aa)). The residue at position 44 (Lys-44) is an N6-lipoyllysine. In terms of domain architecture, Peripheral subunit-binding (PSBD) spans 115 to 152 (VAMPSAAKLMAEAGLSAGQVAGTGKDGRITKGDALAAA). Catalysis depends on residues His-387 and Asp-391.

This sequence belongs to the 2-oxoacid dehydrogenase family. In terms of assembly, forms a 24-polypeptide structural core with octahedral symmetry. Part of the 2-oxoglutarate dehydrogenase (OGDH) complex composed of E1 (2-oxoglutarate dehydrogenase), E2 (dihydrolipoamide succinyltransferase) and E3 (dihydrolipoamide dehydrogenase); the complex contains multiple copies of the three enzymatic components (E1, E2 and E3). (R)-lipoate is required as a cofactor.

The enzyme catalyses N(6)-[(R)-dihydrolipoyl]-L-lysyl-[protein] + succinyl-CoA = N(6)-[(R)-S(8)-succinyldihydrolipoyl]-L-lysyl-[protein] + CoA. It functions in the pathway amino-acid degradation; L-lysine degradation via saccharopine pathway; glutaryl-CoA from L-lysine: step 6/6. In terms of biological role, E2 component of the 2-oxoglutarate dehydrogenase (OGDH) complex which catalyzes the second step in the conversion of 2-oxoglutarate to succinyl-CoA and CO(2). The polypeptide is Dihydrolipoyllysine-residue succinyltransferase component of 2-oxoglutarate dehydrogenase complex (sucB) (Cupriavidus necator (strain ATCC 17699 / DSM 428 / KCTC 22496 / NCIMB 10442 / H16 / Stanier 337) (Ralstonia eutropha)).